A 410-amino-acid chain; its full sequence is Putative transposase Rv3428c (410 aa).

One can recognise an Integrase catalytic domain in the interval 40–220; the sequence is VPRGPVDAGS…QPLRMFEAVE (181 aa). The disordered stretch occupies residues 390–410; sequence AANEPTTSSPASTAGGVPARP.

It belongs to the transposase IS21/IS408/IS1162 family.

In Mycobacterium tuberculosis (strain ATCC 25618 / H37Rv), this protein is Putative transposase Rv3428c.